The sequence spans 327 residues: Probable cell division protein WhiA (327 aa).

Residues serine 275–arginine 308 constitute a DNA-binding region (H-T-H motif).

This sequence belongs to the WhiA family.

Involved in cell division and chromosome segregation. The polypeptide is Probable cell division protein WhiA (Nocardia farcinica (strain IFM 10152)).